A 547-amino-acid chain; its full sequence is Membrane protein insertase YidC (547 aa).

6 helical membrane passes run 6 to 26 (LILVLIFTFSSFMLWENWQKY), 328 to 348 (VVDYGWLTVVAAPIFWALEAI), 351 to 371 (LVGNWGWAIVVLTIMIKAVFF), 425 to 445 (LPILVQIPVFIALYWVLLGAV), 459 to 479 (LASADPYYILPVIMMVSMFVQ), and 499 to 519 (PLIFGFMFFWFPAGLVLYWVV).

The protein belongs to the OXA1/ALB3/YidC family. Type 1 subfamily. As to quaternary structure, interacts with the Sec translocase complex via SecD. Specifically interacts with transmembrane segments of nascent integral membrane proteins during membrane integration.

The protein localises to the cell inner membrane. Functionally, required for the insertion and/or proper folding and/or complex formation of integral membrane proteins into the membrane. Involved in integration of membrane proteins that insert both dependently and independently of the Sec translocase complex, as well as at least some lipoproteins. Aids folding of multispanning membrane proteins. The chain is Membrane protein insertase YidC from Dechloromonas aromatica (strain RCB).